Consider the following 66-residue polypeptide: Type 3 secretion system chaperone YscE (66 aa).

The protein belongs to the YscE family. As to quaternary structure, component of the heterodimeric YscE-YscG chaperone. The YscE-YscG chaperone forms a stable ternary complex with YscF/SctF. YscE interacts with YscG, but makes very little direct contact with YscF. Homodimer in solution.

Its subcellular location is the cytoplasm. In terms of biological role, chaperone of the type III secretion system (T3SS), also called injectisome, which is used to inject bacterial effector proteins into eukaryotic host cells. Along with YscG, prevents premature polymerization of the YscF/SctF needle protein within the cytoplasm. Is also required for stable expression of cytosolic YscF and for YscF secretion. Likely plays a role in targeting YscF present in the cytosolic YscEFG complex to the T3SS apparatus. Required for Yop secretion. This Yersinia pestis protein is Type 3 secretion system chaperone YscE.